A 359-amino-acid polypeptide reads, in one-letter code: Type-1 angiotensin II receptor (359 aa).

Topologically, residues 1-25 (MMLNSSTEDGIKRIQDDCPKAGRHN) are extracellular. N-linked (GlcNAc...) asparagine glycosylation occurs at Asn4. The angiotensin II site is built by Gln15 and Asp17. Cystine bridges form between Cys18–Cys274 and Cys101–Cys180. Residues 26-55 (YIFVMIPTLYSIIFVVGIFGNSLAVIVIYF) form a helical membrane-spanning segment. The Cytoplasmic segment spans residues 56–61 (YMKLKT). A helical transmembrane segment spans residues 62–89 (VASVFLLNLALADLCFLLTLPLWAVYTA). Residues 90–98 (MEYRWPFGN) are Extracellular-facing. A helical membrane pass occupies residues 99 to 125 (YLCKIASASVSFNLYASVFLLTCLSID). The Cytoplasmic segment spans residues 126–141 (RYLAIVHPMKSRLRRT). The chain crosses the membrane as a helical span at residues 142 to 165 (MLVAKVTCIIIWLLAGLASLPAII). Over 166 to 190 (HRNVFFIENTNITVCAFHYESQNST) the chain is Extracellular. An angiotensin II-binding site is contributed by Arg167. The N-linked (GlcNAc...) asparagine glycan is linked to Asn176. Angiotensin II contacts are provided by Phe182, His183, and Tyr184. An N-linked (GlcNAc...) asparagine glycan is attached at Asn188. The helical transmembrane segment at 191 to 216 (LPIGLGLTKNILGFLFPFLIILTSYT) threads the bilayer. Lys199 contributes to the angiotensin II binding site. At 217-239 (LIWKALKKAYEIQKNKPRNDDIF) the chain is on the cytoplasmic side. The helical transmembrane segment at 240 to 268 (KIIMAIVLFFFFSWVPHQIFTFLDVLIQL) threads the bilayer. The Extracellular segment spans residues 269–278 (GVIHDCRIAD). Residues 279-304 (IVDTAMPITICIAYFNNCLNPLFYGF) form a helical membrane-spanning segment. The Cytoplasmic segment spans residues 305-359 (LGKKFKKYFLQLLKYIPPKAKSHSNLSTKMSTLSYRPSDNVSSSSKKPVPCFEVE). Residues 335-350 (STLSYRPSDNVSSSSK) show a composition bias toward polar residues. The disordered stretch occupies residues 335 to 359 (STLSYRPSDNVSSSSKKPVPCFEVE). The S-palmitoyl cysteine moiety is linked to residue Cys355.

It belongs to the G-protein coupled receptor 1 family. As to quaternary structure, interacts with MAS1. Interacts with ARRB1. Interacts with FLNA (via filamin repeat 21); increases PKA-mediated phosphorylation of FLNA. C-terminal Ser or Thr residues may be phosphorylated.

Its subcellular location is the cell membrane. Its function is as follows. Receptor for angiotensin II, a vasoconstricting peptide, which acts as a key regulator of blood pressure and sodium retention by the kidney. The activated receptor in turn couples to G-alpha proteins G(q) (GNAQ, GNA11, GNA14 or GNA15) and thus activates phospholipase C and increases the cytosolic Ca(2+) concentrations, which in turn triggers cellular responses such as stimulation of protein kinase C. The protein is Type-1 angiotensin II receptor (AGTR1) of Oryctolagus cuniculus (Rabbit).